The chain runs to 154 residues: Transcriptional repressor NrdR (154 aa).

A zinc finger lies at 3-34; sequence CPFCGNENTRVIDTRAAEDGFAIKRRRECENC. Residues 49-139 form the ATP-cone domain; the sequence is LIVVKKDGSK…VYRQFKDVNS (91 aa).

The protein belongs to the NrdR family. Zn(2+) serves as cofactor.

Its function is as follows. Negatively regulates transcription of bacterial ribonucleotide reductase nrd genes and operons by binding to NrdR-boxes. The chain is Transcriptional repressor NrdR from Carboxydothermus hydrogenoformans (strain ATCC BAA-161 / DSM 6008 / Z-2901).